The sequence spans 134 residues: Small ribosomal subunit protein uS11 (134 aa).

The protein belongs to the universal ribosomal protein uS11 family. In terms of assembly, part of the 30S ribosomal subunit. Interacts with proteins S7 and S18. Binds to IF-3.

Functionally, located on the platform of the 30S subunit, it bridges several disparate RNA helices of the 16S rRNA. Forms part of the Shine-Dalgarno cleft in the 70S ribosome. The polypeptide is Small ribosomal subunit protein uS11 (Delftia acidovorans (strain DSM 14801 / SPH-1)).